Consider the following 172-residue polypeptide: Ribosome maturation factor RimP (172 aa).

Belongs to the RimP family.

The protein localises to the cytoplasm. In terms of biological role, required for maturation of 30S ribosomal subunits. This Nitratidesulfovibrio vulgaris (strain ATCC 29579 / DSM 644 / CCUG 34227 / NCIMB 8303 / VKM B-1760 / Hildenborough) (Desulfovibrio vulgaris) protein is Ribosome maturation factor RimP.